The chain runs to 303 residues: ATP synthase gamma chain (303 aa).

Belongs to the ATPase gamma chain family. As to quaternary structure, F-type ATPases have 2 components, CF(1) - the catalytic core - and CF(0) - the membrane proton channel. CF(1) has five subunits: alpha(3), beta(3), gamma(1), delta(1), epsilon(1). CF(0) has three main subunits: a, b and c.

Its subcellular location is the cell membrane. Functionally, produces ATP from ADP in the presence of a proton gradient across the membrane. The gamma chain is believed to be important in regulating ATPase activity and the flow of protons through the CF(0) complex. In Nocardioides sp. (strain ATCC BAA-499 / JS614), this protein is ATP synthase gamma chain.